The following is a 553-amino-acid chain: Thioredoxin domain-containing protein 2 (553 aa).

2 disordered regions span residues M1–E37 and T77–M442. The segment covering P99–Q143 has biased composition (basic and acidic residues). Repeat copies occupy residues Q113 to I127, Q128 to I142, Q143 to I157, Q158 to S172, Q173 to I187, Q188 to I202, Q203 to I217, Q218 to S232, Q233 to I247, Q248 to I262, Q263 to S277, Q278 to I292, Q293 to I307, Q308 to I322, Q323 to I337, Q338 to I352, Q353 to I367, Q368 to I382, Q383 to I397, P398 to I412, Q413 to T427, and P428 to M442. The 22 X 15 AA approximate tandem repeat of Q-P-K-X-G-D-I-P-K-S-[PS]-E-[KE]-X-I stretch occupies residues Q113–M442. The segment covering Q173–I209 has biased composition (basic and acidic residues). A compositionally biased stretch (basic and acidic residues) spans Q233 to I254. Basic and acidic residues-rich tracts occupy residues Q278 to K376 and K385 to E439. The residue at position 362 (S362) is a Phosphoserine. S392 carries the phosphoserine modification. A Thioredoxin domain is found at S429–K553. A disulfide bridge links C480 with C483.

As to expression, testis-specific. Only expressed during spermiogenesis, prominently in round and elongating spermatids.

The protein localises to the cytoplasm. Its function is as follows. Probably plays a regulatory role in sperm development. May participate in regulation of fibrous sheath (FS) assembly by supporting the formation of disulfide bonds during sperm tail morphogenesis. May also be required to rectify incorrect disulfide pairing and generate suitable pairs between the FS constituents. Can reduce disulfide bonds in vitro in the presence of NADP and thioredoxin reductase. This Homo sapiens (Human) protein is Thioredoxin domain-containing protein 2 (TXNDC2).